The primary structure comprises 836 residues: Zinc fingers and homeoboxes protein 2 (836 aa).

The disordered stretch occupies residues 1–61 (MASKRKSTTP…EHSSKETEVV (61 aa)). Residues 8 to 19 (TTPCMVRTSQVL) show a composition bias toward polar residues. Positions 27-77 (ADRAKDKGAGMPQSDVTKDSWAAEPEHSSKETEVVEVKSMGENLSKKLQGG) are interaction with EFNB1. The span at 50–61 (EPEHSSKETEVV) shows a compositional bias: basic and acidic residues. Lysine 64 participates in a covalent cross-link: Glycyl lysine isopeptide (Lys-Gly) (interchain with G-Cter in SUMO2). C2H2-type zinc fingers lie at residues 78 to 101 (YECK…DMQH) and 110 to 133 (YVCA…SKFH). Positions 164 to 214 (PITASGPGSSDNDPGVSVGKTPMTKTGKLKADAKKVPKKPDEAAPENHMEG) are disordered. Over residues 192 to 214 (LKADAKKVPKKPDEAAPENHMEG) the composition is skewed to basic and acidic residues. Residues 195–358 (DAKKVPKKPD…PAQLTPTKVS (164 aa)) form a required for homodimerization region. DNA-binding regions (homeobox) lie at residues 263–324 (NTTK…WSPE), 439–501 (TPAS…IVHI), 530–591 (PQKF…EQAV), and 628–690 (SPSS…TLSW). The interval 263 to 446 (NTTKYNSALD…PLTPASDRKK (184 aa)) is required for repressor activity. Residues 263–497 (NTTKYNSALD…SDHRYRCQRG (235 aa)) form a required for interaction with NFYA region. Positions 317–446 (HGISWSPEEV…PLTPASDRKK (130 aa)) are required for nuclear localization. The interval 404 to 442 (GQKRPLVTPQAAPEPKRPHIAQVPEPPPKVANTPLTPAS) is disordered. Residue lysine 455 forms a Glycyl lysine isopeptide (Lys-Gly) (interchain with G-Cter in SUMO2) linkage. Composition is skewed to basic and acidic residues over residues 699–709 (MSDDRGRDAVS), 730–746 (YAKD…EKLV), and 813–824 (RVAEGTVERADS). A disordered region spans residues 699–836 (MSDDRGRDAV…DSTPAEAGQA (138 aa)). 2 positions are modified to phosphoserine: serine 824 and serine 826.

The protein belongs to the ZHX family. Homodimer (via homeobox domain 1). Heterodimer with ZHX1 (via homeobox domain 1). Heterodimer with ZHX3 (via homeobox domain 1). Heterodimerization with ZHX1 is not necessary for repressor activity. Interacts (via homeobox domain) with NFYA (via N-terminus). Interacts with EFNB1 intracellular domain peptide; the interaction enhances ZHX2 transcriptional repression activity. As to expression, expressed in retina where it localizes to Muller glial cells of the inner nuclear layer (at protein level). Detected in heart, brain, spleen, lung, liver, skeletal muscle, kidney and testis.

The protein resides in the nucleus. Functionally, acts as a transcriptional repressor. Represses the promoter activity of the CDC25C gene stimulated by NFYA. May play a role in retinal development where it regulates the composition of bipolar cell populations, by promoting differentiation of bipolar OFF-type cells. In the brain, may promote maintenance and suppress differentiation of neural progenitor cells in the developing cortex. This is Zinc fingers and homeoboxes protein 2 (Zhx2) from Mus musculus (Mouse).